The sequence spans 139 residues: Putative pre-16S rRNA nuclease (139 aa).

The protein belongs to the YqgF nuclease family.

Its subcellular location is the cytoplasm. Its function is as follows. Could be a nuclease involved in processing of the 5'-end of pre-16S rRNA. This is Putative pre-16S rRNA nuclease from Streptococcus thermophilus (strain CNRZ 1066).